A 179-amino-acid polypeptide reads, in one-letter code: Endoribonuclease YbeY (179 aa).

3 residues coordinate Zn(2+): His148, His152, and His158.

The protein belongs to the endoribonuclease YbeY family. It depends on Zn(2+) as a cofactor.

The protein resides in the cytoplasm. In terms of biological role, single strand-specific metallo-endoribonuclease involved in late-stage 70S ribosome quality control and in maturation of the 3' terminus of the 16S rRNA. The sequence is that of Endoribonuclease YbeY from Prochlorococcus marinus (strain AS9601).